Consider the following 585-residue polypeptide: TVGVVTGLILSFANVSSLYEMSLLAFSGLLGGLLKDGKKLGARLGLVVGSLLIGLYAQADQGLTTNLYESLTAVVLFLLTPSFVLKNLSKLVPGTSENMLEQQQYVRKIRDVTANRVEQFSNVFQALSKSFTQNGFYDEKPSADKEVDYFLSSVTERTCQFCFKKEQCWAQQFDTTYEYMKEIMLEVDNGTLEQNPRLIREMDKHCVKSKKVIDVIEHELTYFKANQHLKAQIQESRRIVAEQLHGVSEVMGNFAKEIKRERENLNVQEEQILEALRNFGMEINQIEIYSLEPGNVDIEMWVPYCHGRGECEKIIAPMLTDILGESIVVKNEECAKYPQGYCHVSFGCTKAYVVDTGVAHAAKGGGFVSGDSYSMIELNAGKYALAISDGMGNGERAHYESSETLQLLKQILQTGIEETIAIKSINSILSLRTNDEIFSTLDLAMIDLQDANVNFLKIGSTPSFIKRGDKVIKIQASNLPMGIIEEFEVDVVNEQMKAEDLLIMMSDGVFEGPKHVENYEMWMKRKIGELQTNDPQEIADLIMEEVIRTKVGLIEDDMTVVVAKLQHNTPKWSSIPSYAYRNLAQ.

The next 2 helical transmembrane spans lie at 40 to 57 and 70 to 86; these read LGAR…GLYA and SLTA…FVLK. Positions 355-565 constitute a PPM-type phosphatase domain; sequence DTGVAHAAKG…DDMTVVVAKL (211 aa).

Its subcellular location is the cell membrane. It catalyses the reaction O-phospho-L-seryl-[protein] + H2O = L-seryl-[protein] + phosphate. The enzyme catalyses O-phospho-L-threonyl-[protein] + H2O = L-threonyl-[protein] + phosphate. Functionally, normally needed for pro-sigma E processing during sporulation but can be bypassed in vegetative cells. Activates SpoIIAA by dephosphorylation. The chain is Stage II sporulation protein E (spoIIE) from Priestia megaterium (Bacillus megaterium).